The sequence spans 226 residues: SPI-1 type 3 secretion system stator protein (226 aa).

In terms of assembly, the core secretion machinery of the T3SS is composed of approximately 20 different proteins, including cytoplasmic components, a base, an export apparatus and a needle. This subunit is part of the cytosolic complex. Interacts directly with InvC/SctN1 (T3SS-1 ATPase) and SpaO/SctQ (the major sorting platform component).

It is found in the cytoplasm. Its function is as follows. Component of the type III secretion system (T3SS), also called injectisome, which is used to inject bacterial effector proteins into eukaryotic host cells. Acts as a regulator of the InvC/SctN1 ATPase activity. Required for invasion and secretion. The sequence is that of SPI-1 type 3 secretion system stator protein from Salmonella typhimurium (strain SL1344).